Reading from the N-terminus, the 64-residue chain is Small ribosomal subunit protein bS21 (64 aa).

The protein belongs to the bacterial ribosomal protein bS21 family.

The sequence is that of Small ribosomal subunit protein bS21 from Amoebophilus asiaticus (strain 5a2).